The following is a 157-amino-acid chain: Myosin regulatory light chain, striated adductor muscle (157 aa).

2 EF-hand domains span residues 16 to 51 (KQIQ…LGRA) and 85 to 120 (DSEE…MGDN). Ca(2+)-binding residues include D29, D31, D33, and D40.

Functionally, in molluscan muscle, calcium regulation is associated with myosin rather than with actin. Muscle myosin contains two types of light chains: the catalytic light chain, essential for ATPase activity, and the regulatory light chain, a calcium-binding protein responsible for Ca(2+) dependent binding and Ca(2+) dependent Mg-ATPase activity. The sequence is that of Myosin regulatory light chain, striated adductor muscle from Argopecten irradians (Bay scallop).